We begin with the raw amino-acid sequence, 201 residues long: Peptidyl-tRNA hydrolase (201 aa).

Tyrosine 17 is a binding site for tRNA. The Proton acceptor role is filled by histidine 22. Phenylalanine 76, asparagine 78, and asparagine 124 together coordinate tRNA.

Belongs to the PTH family. In terms of assembly, monomer.

It is found in the cytoplasm. It catalyses the reaction an N-acyl-L-alpha-aminoacyl-tRNA + H2O = an N-acyl-L-amino acid + a tRNA + H(+). Hydrolyzes ribosome-free peptidyl-tRNAs (with 1 or more amino acids incorporated), which drop off the ribosome during protein synthesis, or as a result of ribosome stalling. In terms of biological role, catalyzes the release of premature peptidyl moieties from peptidyl-tRNA molecules trapped in stalled 50S ribosomal subunits, and thus maintains levels of free tRNAs and 50S ribosomes. This Nitratidesulfovibrio vulgaris (strain ATCC 29579 / DSM 644 / CCUG 34227 / NCIMB 8303 / VKM B-1760 / Hildenborough) (Desulfovibrio vulgaris) protein is Peptidyl-tRNA hydrolase.